The chain runs to 349 residues: Histidinol-phosphate aminotransferase (349 aa).

Lys-210 is modified (N6-(pyridoxal phosphate)lysine).

The protein belongs to the class-II pyridoxal-phosphate-dependent aminotransferase family. Histidinol-phosphate aminotransferase subfamily. In terms of assembly, homodimer. Pyridoxal 5'-phosphate serves as cofactor.

The catalysed reaction is L-histidinol phosphate + 2-oxoglutarate = 3-(imidazol-4-yl)-2-oxopropyl phosphate + L-glutamate. It functions in the pathway amino-acid biosynthesis; L-histidine biosynthesis; L-histidine from 5-phospho-alpha-D-ribose 1-diphosphate: step 7/9. The protein is Histidinol-phosphate aminotransferase of Flavobacterium johnsoniae (strain ATCC 17061 / DSM 2064 / JCM 8514 / BCRC 14874 / CCUG 350202 / NBRC 14942 / NCIMB 11054 / UW101) (Cytophaga johnsonae).